The primary structure comprises 124 residues: Large ribosomal subunit protein bL12 (124 aa).

It belongs to the bacterial ribosomal protein bL12 family. Homodimer. Part of the ribosomal stalk of the 50S ribosomal subunit. Forms a multimeric L10(L12)X complex, where L10 forms an elongated spine to which 2 to 4 L12 dimers bind in a sequential fashion. Binds GTP-bound translation factors.

Forms part of the ribosomal stalk which helps the ribosome interact with GTP-bound translation factors. Is thus essential for accurate translation. This Cupriavidus necator (strain ATCC 17699 / DSM 428 / KCTC 22496 / NCIMB 10442 / H16 / Stanier 337) (Ralstonia eutropha) protein is Large ribosomal subunit protein bL12.